Reading from the N-terminus, the 116-residue chain is U30-theraphotoxin-Cg1b (116 aa).

The N-terminal stretch at 1–17 is a signal peptide; the sequence is MKLCVLTIATLLVTATS. Residues 18-53 constitute a propeptide that is removed on maturation; the sequence is LETQKEIAEGNELTREETPSLVEHKEDEAAAASEKR. Residues 25 to 45 form a disordered region; that stretch reads AEGNELTREETPSLVEHKEDE. Cystine bridges form between C55–C69, C62–C75, C66–C112, and C68–C88.

Belongs to the neurotoxin 03 (Tx2) family. 02 subfamily. Expressed by the venom gland.

It localises to the secreted. Functionally, probable ion channel inhibitor. This chain is U30-theraphotoxin-Cg1b, found in Chilobrachys guangxiensis (Chinese earth tiger tarantula).